We begin with the raw amino-acid sequence, 132 residues long: Riboflavin kinase (132 aa).

A CDP-binding site is contributed by 10–15; that stretch reads GLGEGR. Mg(2+) contacts are provided by Thr39 and Asn41. FMN-binding residues include Thr95, Tyr96, and Glu103. Residue 108–111 coordinates CDP; the sequence is MKLR.

In terms of assembly, monomer. It depends on Mg(2+) as a cofactor.

It catalyses the reaction riboflavin + CTP = CDP + FMN + H(+). Its pathway is cofactor biosynthesis; FMN biosynthesis; FMN from riboflavin (CTP route): step 1/1. Its function is as follows. Catalyzes the CTP-dependent phosphorylation of riboflavin (vitamin B2) to form flavin mononucleotide (FMN). Can also utilize UTP as the phosphate donor, although less efficiently, and it is unclear if ATP and GTP can also serve as substrates or not. This Methanocaldococcus jannaschii (strain ATCC 43067 / DSM 2661 / JAL-1 / JCM 10045 / NBRC 100440) (Methanococcus jannaschii) protein is Riboflavin kinase (ribK).